A 283-amino-acid chain; its full sequence is Phosphatidylglycerol--prolipoprotein diacylglyceryl transferase (283 aa).

Helical transmembrane passes span 18-38 (LGGI…VVAF), 62-82 (YFLW…VLIY), 106-126 (FIGI…IASY), 136-156 (LLIY…FGRI), 190-210 (PSQL…VMWA), 218-238 (GLLI…AEFY), and 252-272 (LSMG…ILLY). Arginine 155 contacts a 1,2-diacyl-sn-glycero-3-phospho-(1'-sn-glycerol).

The protein belongs to the Lgt family.

It localises to the cell inner membrane. It catalyses the reaction L-cysteinyl-[prolipoprotein] + a 1,2-diacyl-sn-glycero-3-phospho-(1'-sn-glycerol) = an S-1,2-diacyl-sn-glyceryl-L-cysteinyl-[prolipoprotein] + sn-glycerol 1-phosphate + H(+). It functions in the pathway protein modification; lipoprotein biosynthesis (diacylglyceryl transfer). In terms of biological role, catalyzes the transfer of the diacylglyceryl group from phosphatidylglycerol to the sulfhydryl group of the N-terminal cysteine of a prolipoprotein, the first step in the formation of mature lipoproteins. The polypeptide is Phosphatidylglycerol--prolipoprotein diacylglyceryl transferase (Helicobacter pylori (strain J99 / ATCC 700824) (Campylobacter pylori J99)).